Consider the following 138-residue polypeptide: Nucleoside diphosphate kinase (138 aa).

Residues K9, F57, R85, T91, R102, and N112 each contribute to the ATP site. H115 (pros-phosphohistidine intermediate) is an active-site residue.

The protein belongs to the NDK family. Mg(2+) serves as cofactor.

It is found in the cytoplasm. The catalysed reaction is a 2'-deoxyribonucleoside 5'-diphosphate + ATP = a 2'-deoxyribonucleoside 5'-triphosphate + ADP. It carries out the reaction a ribonucleoside 5'-diphosphate + ATP = a ribonucleoside 5'-triphosphate + ADP. Its function is as follows. Major role in the synthesis of nucleoside triphosphates other than ATP. The ATP gamma phosphate is transferred to the NDP beta phosphate via a ping-pong mechanism, using a phosphorylated active-site intermediate. The protein is Nucleoside diphosphate kinase of Picrophilus torridus (strain ATCC 700027 / DSM 9790 / JCM 10055 / NBRC 100828 / KAW 2/3).